The following is a 123-amino-acid chain: Galanin peptides (123 aa).

A signal peptide spans 1 to 19 (MPRGCALLLASLLLASALS). Positions 20 to 30 (ATLGLGSPVKE) are excised as a propeptide. A61 carries the alanine amide modification. Phosphoserine occurs at positions 116 and 117.

This sequence belongs to the galanin family.

The protein localises to the secreted. Functionally, endocrine hormone of the central and peripheral nervous systems that binds and activates the G protein-coupled receptors GALR1, GALR2, and GALR3. This small neuropeptide may regulate diverse physiologic functions including contraction of smooth muscle of the gastrointestinal and genitourinary tract, growth hormone and insulin release and adrenal secretion. In Sus scrofa (Pig), this protein is Galanin peptides (GAL).